The following is a 121-amino-acid chain: uncharacterized protein (121 aa).

Disordered regions lie at residues 1–41 (MRRQ…QESR) and 94–121 (GGTI…GLRR). A compositionally biased stretch (polar residues) spans 98-108 (SGQQSRNSSLP).

In terms of tissue distribution, predominantly expressed in tissues containing motile cilia. Also expressed in non-motile ciliated adult olfactory bulbs.

The protein resides in the cytoplasm. It is found in the cytoskeleton. Its subcellular location is the cilium basal body. This is an uncharacterized protein from Mus musculus (Mouse).